The primary structure comprises 232 residues: 2-C-methyl-D-erythritol 4-phosphate cytidylyltransferase (232 aa).

Belongs to the IspD/TarI cytidylyltransferase family. IspD subfamily.

It carries out the reaction 2-C-methyl-D-erythritol 4-phosphate + CTP + H(+) = 4-CDP-2-C-methyl-D-erythritol + diphosphate. The protein operates within isoprenoid biosynthesis; isopentenyl diphosphate biosynthesis via DXP pathway; isopentenyl diphosphate from 1-deoxy-D-xylulose 5-phosphate: step 2/6. Functionally, catalyzes the formation of 4-diphosphocytidyl-2-C-methyl-D-erythritol from CTP and 2-C-methyl-D-erythritol 4-phosphate (MEP). The protein is 2-C-methyl-D-erythritol 4-phosphate cytidylyltransferase of Shewanella frigidimarina (strain NCIMB 400).